Here is a 240-residue protein sequence, read N- to C-terminus: Enoyl-CoA delta isomerase 2, peroxisomal (240 aa).

Residues 238-240 carry the Microbody targeting signal motif; it reads PKL.

It belongs to the enoyl-CoA hydratase/isomerase family.

The protein localises to the peroxisome. It catalyses the reaction a (3Z)-enoyl-CoA = a 4-saturated (2E)-enoyl-CoA. The catalysed reaction is a (3E)-enoyl-CoA = a 4-saturated (2E)-enoyl-CoA. The protein operates within lipid metabolism; fatty acid beta-oxidation. Able to isomerize both 3-cis and 3-trans double bonds into the 2-trans form in a range of enoyl-CoA species. Essential for the beta oxidation of unsaturated fatty acids. Involved with IBR1 and IBR3 in the peroxisomal beta-oxidation of indole-3-butyric acid (IBA) to form indole-3-acetic acid (IAA), a biologically active auxin. This chain is Enoyl-CoA delta isomerase 2, peroxisomal, found in Arabidopsis thaliana (Mouse-ear cress).